The chain runs to 512 residues: Oxalate--CoA ligase (512 aa).

168–179 (HTSGTTGRPKVV) contacts ATP. A phosphoserine mark is found at serine 283 and serine 284. An FACS motif is present at residues 381-429 (DRFFRTGDEGKLDKDGYVFITGRIKELVNRGGEKISPAEIDAVLMQHPD). A Microbody targeting signal motif is present at residues 510–512 (AKL).

Belongs to the ATP-dependent AMP-binding enzyme family.

Its subcellular location is the peroxisome matrix. It localises to the peroxisome membrane. It carries out the reaction oxalate + ATP + CoA = oxalyl-CoA + AMP + diphosphate. Functionally, catalyzes the first step in a degradation pathway of oxalate to CO(2) to protect the cell against the harmful effects of oxalate derived from endogenous processes or an environmental sources. The protein is Oxalate--CoA ligase (pcs60) of Schizosaccharomyces pombe (strain 972 / ATCC 24843) (Fission yeast).